The primary structure comprises 349 residues: DNA replication and repair protein RecF (349 aa).

30–37 (GKNGSGKT) contributes to the ATP binding site.

Belongs to the RecF family.

The protein localises to the cytoplasm. Functionally, the RecF protein is involved in DNA metabolism; it is required for DNA replication and normal SOS inducibility. RecF binds preferentially to single-stranded, linear DNA. It also seems to bind ATP. This is DNA replication and repair protein RecF from Francisella tularensis subsp. holarctica (strain FTNF002-00 / FTA).